The sequence spans 285 residues: uncharacterized protein (285 aa).

7 helical membrane passes run 6–26 (YLVV…TPLI), 38–58 (VFAA…YIFP), 84–104 (IFLL…IFLR), 110–130 (GVLA…ELIF), 153–173 (FMMH…DDGF), 176–196 (ISFF…ALMV), and 236–256 (LIFG…TVLV).

It is found in the cell membrane. This is an uncharacterized protein from Mycoplasma pneumoniae (strain ATCC 29342 / M129 / Subtype 1) (Mycoplasmoides pneumoniae).